The following is a 1269-amino-acid chain: Regulator of nonsense transcripts 2 (1269 aa).

2 disordered regions span residues 1 to 125 (MPAE…EKEE) and 143 to 162 (LRSK…FFSR). Residues 57-133 (KKRLEEDKRK…EESLQLHQEA (77 aa)) are a coiled coil. The tract at residues 94–132 (KKKQEEEERKKQEEQAKRQQEEAAAQLKEKEESLQLHQE) is sufficient for interaction with UPF1. Residues 168–396 (KKNTAFVKKL…KGELSEDRHK (229 aa)) enclose the MIF4G 1 domain. 2 disordered regions span residues 422–444 (NMPD…DIFT) and 487–518 (KSQN…DLEL). Composition is skewed to basic and acidic residues over residues 427–438 (PQDKPTPEEHGP) and 487–511 (KSQN…KEAS). 2 consecutive MIF4G domains span residues 571-755 (QQLP…YCNP) and 774-984 (RKLL…LRPK). A sufficient for interaction with UPF3A and UPF3B region spans residues 709–926 (GRFLFRSPES…IRLVCTILDT (218 aa)). The interval 755 to 1269 (PPPAEKTVRK…LIFKTGGRRR (515 aa)) is sufficient for interaction with EIF4A1 and EIF1. Positions 837–857 (EDVGIHVVDGVLEDIRLGMEV) are binds to UPF3B. Positions 1017–1090 (SKDSMTEGEN…KENETDEENA (74 aa)) are disordered. Residues 1025–1073 (ENLEEDEEEEEGGAETEEQSGNESEVNEPEEEEGSEEEEEGEEEEEENT) show a composition bias toward acidic residues. The sufficient for interaction with UPF1 C-terminus stretch occupies residues 1081–1269 (KENETDEENA…LIFKTGGRRR (189 aa)). Thr1085 carries the phosphothreonine modification. Interaction with UPF1 regions lie at residues 1102 to 1126 (VPCV…QQRS) and 1164 to 1204 (DTMP…AEQE). Residues 1102–1195 (VPCVEDEDFI…PMSSQLAANH (94 aa)) are necessary for interaction with UPF1. Positions 1218-1269 (ERQEQEDYQEMLQSLAQRPAPANTNRERRPRYQHPKGAPNADLIFKTGGRRR) are disordered.

In terms of assembly, found in a post-splicing messenger ribonucleoprotein (mRNP) complex. Associates with the exon junction complex (EJC). Interacts with SMG1, EST1A, UPF3A, UPF3B, EIF4A1 and EIF1. Interacts with UPF1; interaction is promoted by TDRD6. Interacts with DDX4. In terms of tissue distribution, localized in male germ cells.

It is found in the cytoplasm. The protein resides in the perinuclear region. Functionally, involved in nonsense-mediated decay (NMD) of mRNAs containing premature stop codons by associating with the nuclear exon junction complex (EJC). Recruited by UPF3B associated with the EJC core at the cytoplasmic side of the nuclear envelope and the subsequent formation of an UPF1-UPF2-UPF3 surveillance complex (including UPF1 bound to release factors at the stalled ribosome) is believed to activate NMD. In cooperation with UPF3B stimulates both ATPase and RNA helicase activities of UPF1. Binds spliced mRNA. The sequence is that of Regulator of nonsense transcripts 2 from Mus musculus (Mouse).